The sequence spans 525 residues: MMGKGFLDCESLVALQEMALHPIDLTASGCLSEERIQKNSLSAEGFTYSYATERVDDRCLEALQGLTEERELIKQMECMQQGAIMNRIEGFQSESRPVLHTATRAWVRDQDLHEEAAAIARHSKEEALRLAEFLYIARAKFSTLVQMGIGGSELGPKAMYFAMQGSCPSDKRIFFVSNIDPDNAAEVLREIDLEQTLVVVVSKSGTTLEPAANEELFRQAYQNKGLSIAEHFVAVTSQGSPMDDKSRYLEVFHLWDSIGGRFSATSMVGGVVLGFAFGYEAFIEFLQGAAAIDAHALTPKMRENLPLLSAMLGVWNRNLLGYPTTAVIPYSTGLKYFTAHLQQCGMESNGKSISREGKEISFRTSPIIWGDVGTNCQHSFFQSLHQGTDIVPVEFIGFLHNQRGLDCVLSGSSSSQKLFANLVAQSLALAQGRDNANSNKRFKGNRPSSILVAQQLSPRIAGSLLAFYEHKFAFQGFCWGINSFDQEGVSLGKELATQIIGIMSGNAPVEFSEARGMLRLFNVLT.

Catalysis depends on Glu-347, which acts as the Proton donor. Active-site residues include His-378 and Lys-493.

Belongs to the GPI family.

The protein resides in the cytoplasm. The catalysed reaction is alpha-D-glucose 6-phosphate = beta-D-fructose 6-phosphate. It participates in carbohydrate biosynthesis; gluconeogenesis. Its pathway is carbohydrate degradation; glycolysis; D-glyceraldehyde 3-phosphate and glycerone phosphate from D-glucose: step 2/4. Catalyzes the reversible isomerization of glucose-6-phosphate to fructose-6-phosphate. This Chlamydia trachomatis serovar D (strain ATCC VR-885 / DSM 19411 / UW-3/Cx) protein is Glucose-6-phosphate isomerase.